Here is a 212-residue protein sequence, read N- to C-terminus: Imidazole glycerol phosphate synthase subunit HisH (212 aa).

Positions Met1–Ala212 constitute a Glutamine amidotransferase type-1 domain. Cys79 (nucleophile) is an active-site residue. Active-site residues include His187 and Glu189.

In terms of assembly, heterodimer of HisH and HisF.

The protein localises to the cytoplasm. It carries out the reaction 5-[(5-phospho-1-deoxy-D-ribulos-1-ylimino)methylamino]-1-(5-phospho-beta-D-ribosyl)imidazole-4-carboxamide + L-glutamine = D-erythro-1-(imidazol-4-yl)glycerol 3-phosphate + 5-amino-1-(5-phospho-beta-D-ribosyl)imidazole-4-carboxamide + L-glutamate + H(+). The enzyme catalyses L-glutamine + H2O = L-glutamate + NH4(+). It participates in amino-acid biosynthesis; L-histidine biosynthesis; L-histidine from 5-phospho-alpha-D-ribose 1-diphosphate: step 5/9. In terms of biological role, IGPS catalyzes the conversion of PRFAR and glutamine to IGP, AICAR and glutamate. The HisH subunit catalyzes the hydrolysis of glutamine to glutamate and ammonia as part of the synthesis of IGP and AICAR. The resulting ammonia molecule is channeled to the active site of HisF. The polypeptide is Imidazole glycerol phosphate synthase subunit HisH (Nitratidesulfovibrio vulgaris (strain DSM 19637 / Miyazaki F) (Desulfovibrio vulgaris)).